The following is a 489-amino-acid chain: Ribulose bisphosphate carboxylase large chain (489 aa).

Residues asparagine 128 and threonine 178 each coordinate substrate. The active-site Proton acceptor is the lysine 180. Substrate is bound at residue lysine 182. Lysine 206, aspartate 208, and glutamate 209 together coordinate Mg(2+). Lysine 206 carries the N6-carboxylysine modification. Catalysis depends on histidine 298, which acts as the Proton acceptor. Residues arginine 299, histidine 331, and serine 383 each coordinate substrate.

It belongs to the RuBisCO large chain family. Type I subfamily. In terms of assembly, heterohexadecamer of 8 large chains and 8 small chains. Requires Mg(2+) as cofactor.

The enzyme catalyses 2 (2R)-3-phosphoglycerate + 2 H(+) = D-ribulose 1,5-bisphosphate + CO2 + H2O. The catalysed reaction is D-ribulose 1,5-bisphosphate + O2 = 2-phosphoglycolate + (2R)-3-phosphoglycerate + 2 H(+). In terms of biological role, ruBisCO catalyzes two reactions: the carboxylation of D-ribulose 1,5-bisphosphate, the primary event in carbon dioxide fixation, as well as the oxidative fragmentation of the pentose substrate. Both reactions occur simultaneously and in competition at the same active site. The chain is Ribulose bisphosphate carboxylase large chain from Nitrosospira multiformis (strain ATCC 25196 / NCIMB 11849 / C 71).